The following is a 393-amino-acid chain: L-methionine gamma-lyase (393 aa).

Pyridoxal 5'-phosphate-binding positions include 63–65 and 93–94; these read YQR and GM. Position 119 (Tyr-119) interacts with L-homocysteine. 206–208 serves as a coordination point for pyridoxal 5'-phosphate; sequence SAT. N6-(pyridoxal phosphate)lysine is present on Lys-209. L-homocysteine is bound at residue Arg-367. Arg-367 lines the L-methionine pocket.

The protein belongs to the trans-sulfuration enzymes family. L-methionine gamma-lyase subfamily. Homotetramer. Pyridoxal 5'-phosphate is required as a cofactor.

The catalysed reaction is L-methionine + H2O = methanethiol + 2-oxobutanoate + NH4(+). The enzyme catalyses L-homocysteine + H2O = 2-oxobutanoate + hydrogen sulfide + NH4(+) + H(+). Its function is as follows. Catalyzes the alpha,gamma-elimination of L-methionine to produce methanethiol, 2-oxobutanoate and ammonia. Is also able to catalyze the alpha,gamma-elimination of L-homocysteine. The chain is L-methionine gamma-lyase from Brevibacterium sandarakinum.